Here is an 885-residue protein sequence, read N- to C-terminus: Pyruvate, phosphate dikinase (885 aa).

Positions 1 to 342 are N-terminal; it reads MQRVYAFEDG…LYMLQTRNGK (342 aa). Arg91 serves as a coordination point for ATP. Positions 343–399 are linker 1; the sequence is MNATATVRTGVDMVEEGLITKEQAIMRIAPQSVDQLLHKNMPANYAEAPLVKGLPAS. The central stretch occupies residues 400-497; the sequence is PGAATGAVVF…EVHEGDILTI (98 aa). His454 (tele-phosphohistidine intermediate) is an active-site residue. Positions 498–533 are linker 2; that stretch reads DGSTGCVYKGEVPLEEPQVGSGYFGTILKWANEIKK. The tract at residues 534 to 885 is C-terminal; sequence IGVFANADLP…QAQIRHPREN (352 aa). Residues Arg561, Arg617, Glu752, Gly773, Thr774, Asn775, and Asp776 each contribute to the substrate site. Glu752 serves as a coordination point for Mg(2+). Position 776 (Asp776) interacts with Mg(2+). Catalysis depends on Cys839, which acts as the Proton donor.

This sequence belongs to the PEP-utilizing enzyme family. In terms of assembly, homodimer. Mg(2+) serves as cofactor.

It carries out the reaction pyruvate + phosphate + ATP = phosphoenolpyruvate + AMP + diphosphate + H(+). Functionally, catalyzes the dephosphorylation of phosphoenolpyruvate and diphosphate to produce ATP. This chain is Pyruvate, phosphate dikinase, found in Entamoeba histolytica (strain ATCC 30459 / HM-1:IMSS / ABRM).